The primary structure comprises 257 residues: Transmembrane protein C257L (257 aa).

2 helical membrane-spanning segments follow: residues 123–143 (LELLGYSPTPIIGGDFMFTAL) and 163–183 (MMIFFLIILLCVILGIFYVLV).

The protein belongs to the asfivirus C257R family.

The protein resides in the host membrane. It is found in the virion. This African swine fever virus (isolate Tick/South Africa/Pretoriuskop Pr4/1996) (ASFV) protein is Transmembrane protein C257L.